The sequence spans 413 residues: Hemolin (413 aa).

A signal peptide spans 1-18 (MVSKSIVALAACVAMCVA). 4 consecutive Ig-like C2-type domains span residues 25–112 (PVLK…HIIS), 121–215 (PTTF…LVGY), 233–322 (PMYV…VKLT), and 327–411 (PRFT…TLVI). Intrachain disulfides connect Cys46-Cys97, Cys141-Cys199, Cys252-Cys305, and Cys349-Cys395. A glycan (N-linked (GlcNAc...) asparagine) is linked at Asn283.

It belongs to the hemolin family. Hemolymph.

It localises to the secreted. In terms of biological role, insect-immune protein with antimicrobial activity. Forms a protein complex at the bacterial surface. Can inhibit hemocyte aggregation. The polypeptide is Hemolin (Manduca sexta (Tobacco hawkmoth)).